Here is a 201-residue protein sequence, read N- to C-terminus: IMP cyclohydrolase (201 aa).

It belongs to the archaeal IMP cyclohydrolase family.

The catalysed reaction is IMP + H2O = 5-formamido-1-(5-phospho-D-ribosyl)imidazole-4-carboxamide. The protein operates within purine metabolism; IMP biosynthesis via de novo pathway; IMP from 5-formamido-1-(5-phospho-D-ribosyl)imidazole-4-carboxamide: step 1/1. In terms of biological role, catalyzes the cyclization of 5-formylamidoimidazole-4-carboxamide ribonucleotide to IMP. The sequence is that of IMP cyclohydrolase from Methanococcus maripaludis (strain C6 / ATCC BAA-1332).